Consider the following 70-residue polypeptide: Large ribosomal subunit protein bL31 (70 aa).

4 residues coordinate Zn(2+): cysteine 16, cysteine 18, cysteine 37, and cysteine 40.

The protein belongs to the bacterial ribosomal protein bL31 family. Type A subfamily. As to quaternary structure, part of the 50S ribosomal subunit. It depends on Zn(2+) as a cofactor.

Binds the 23S rRNA. The sequence is that of Large ribosomal subunit protein bL31 from Psychromonas ingrahamii (strain DSM 17664 / CCUG 51855 / 37).